We begin with the raw amino-acid sequence, 556 residues long: Arginine--tRNA ligase (556 aa).

Residues 132–142 (VNPTGDLHLGH) carry the 'HIGH' region motif.

It belongs to the class-I aminoacyl-tRNA synthetase family. In terms of assembly, monomer.

It is found in the cytoplasm. It catalyses the reaction tRNA(Arg) + L-arginine + ATP = L-arginyl-tRNA(Arg) + AMP + diphosphate. This chain is Arginine--tRNA ligase, found in Oceanobacillus iheyensis (strain DSM 14371 / CIP 107618 / JCM 11309 / KCTC 3954 / HTE831).